The following is a 217-amino-acid chain: Probable chemoreceptor glutamine deamidase CheD (217 aa).

The segment at 194–217 is disordered; it reads ATSGTAPSRGGELFTRASASRTPS.

It belongs to the CheD family.

It carries out the reaction L-glutaminyl-[protein] + H2O = L-glutamyl-[protein] + NH4(+). In terms of biological role, probably deamidates glutamine residues to glutamate on methyl-accepting chemotaxis receptors (MCPs), playing an important role in chemotaxis. The chain is Probable chemoreceptor glutamine deamidase CheD from Cupriavidus pinatubonensis (strain JMP 134 / LMG 1197) (Cupriavidus necator (strain JMP 134)).